The primary structure comprises 264 residues: S-adenosylmethionine decarboxylase proenzyme (264 aa).

S112 serves as the catalytic Schiff-base intermediate with substrate; via pyruvic acid. At S112 the chain carries Pyruvic acid (Ser); by autocatalysis. The Proton acceptor; for processing activity role is filled by H117. The active-site Proton donor; for catalytic activity is C140.

It belongs to the prokaryotic AdoMetDC family. Type 2 subfamily. In terms of assembly, heterooctamer of four alpha and four beta chains arranged as a tetramer of alpha/beta heterodimers. The cofactor is pyruvate. In terms of processing, is synthesized initially as an inactive proenzyme. Formation of the active enzyme involves a self-maturation process in which the active site pyruvoyl group is generated from an internal serine residue via an autocatalytic post-translational modification. Two non-identical subunits are generated from the proenzyme in this reaction, and the pyruvate is formed at the N-terminus of the alpha chain, which is derived from the carboxyl end of the proenzyme. The post-translation cleavage follows an unusual pathway, termed non-hydrolytic serinolysis, in which the side chain hydroxyl group of the serine supplies its oxygen atom to form the C-terminus of the beta chain, while the remainder of the serine residue undergoes an oxidative deamination to produce ammonia and the pyruvoyl group blocking the N-terminus of the alpha chain.

It carries out the reaction S-adenosyl-L-methionine + H(+) = S-adenosyl 3-(methylsulfanyl)propylamine + CO2. Its pathway is amine and polyamine biosynthesis; S-adenosylmethioninamine biosynthesis; S-adenosylmethioninamine from S-adenosyl-L-methionine: step 1/1. In terms of biological role, catalyzes the decarboxylation of S-adenosylmethionine to S-adenosylmethioninamine (dcAdoMet), the propylamine donor required for the synthesis of the polyamines spermine and spermidine from the diamine putrescine. This Sodalis glossinidius (strain morsitans) protein is S-adenosylmethionine decarboxylase proenzyme.